A 149-amino-acid chain; its full sequence is MEEEFKHMVRIARKDIDGNKTMENALTSIKGVGKALSRAIIMSAGYDLNQRIGYLSDEEIERLEEAIKNPAKYNIPSWMINRRNDYETGEDKHLIESDLEMCLREDLNRMRKTRSYKGRRHELGLPVRGQRTKSTFRKGSSVGVRRKKR.

The interval 118 to 149 (GRRHELGLPVRGQRTKSTFRKGSSVGVRRKKR) is disordered.

The protein belongs to the universal ribosomal protein uS13 family. As to quaternary structure, part of the 30S ribosomal subunit. Forms a loose heterodimer with protein S19. Forms two bridges to the 50S subunit in the 70S ribosome.

Its function is as follows. Located at the top of the head of the 30S subunit, it contacts several helices of the 16S rRNA. In the 70S ribosome it contacts the 23S rRNA (bridge B1a) and protein L5 of the 50S subunit (bridge B1b), connecting the 2 subunits; these bridges are implicated in subunit movement. The protein is Small ribosomal subunit protein uS13 of Methanothermobacter thermautotrophicus (strain ATCC 29096 / DSM 1053 / JCM 10044 / NBRC 100330 / Delta H) (Methanobacterium thermoautotrophicum).